The following is a 258-amino-acid chain: UPF0246 protein HS_0482 (258 aa).

The protein belongs to the UPF0246 family.

This Histophilus somni (strain 129Pt) (Haemophilus somnus) protein is UPF0246 protein HS_0482.